Here is a 146-residue protein sequence, read N- to C-terminus: Wheatwin-1 (146 aa).

The N-terminal stretch at 1 to 21 (MAARPMLVVALLCAAAAAATA) is a signal peptide. The residue at position 22 (Q22) is a Pyrrolidone carboxylic acid. Residues 22 to 146 (QQATNVRATY…VNYQFVDCRD (125 aa)) form the Barwin domain. 3 disulfide bridges follow: C52–C84, C73–C107, and C87–C144.

Monomer.

Inhibited by 5'-ADP. In terms of biological role, shows antifungal activity towards B.cinerea and towards the wheat-specific pathogenic fungi F.culmorum and F.graminearum (groups 1 and 2). Has ribonuclease activity. This is Wheatwin-1 (PR4A) from Triticum aestivum (Wheat).